The chain runs to 96 residues: MVCVPCFIVPVLLYLWHKFVQPILLKYWNPWEKKDADGNMIKTEPKNPFDCAGGVCRWAGKKTAVPPGHDPVGPTVAADTATSDAVDDAASSKKTL.

Residues 65–96 (VPPGHDPVGPTVAADTATSDAVDDAASSKKTL) form a disordered region. Residues 75–96 (TVAADTATSDAVDDAASSKKTL) are compositionally biased toward low complexity.

It belongs to the UPF0729 family.

The chain is UPF0729 protein AGAP000931 from Anopheles gambiae (African malaria mosquito).